Reading from the N-terminus, the 442-residue chain is Trigger factor (442 aa).

The PPIase FKBP-type domain maps to 163-248; the sequence is YDRVTINYCI…IIKIEKKQEL (86 aa).

This sequence belongs to the FKBP-type PPIase family. Tig subfamily.

Its subcellular location is the cytoplasm. It carries out the reaction [protein]-peptidylproline (omega=180) = [protein]-peptidylproline (omega=0). Its function is as follows. Involved in protein export. Acts as a chaperone by maintaining the newly synthesized protein in an open conformation. Functions as a peptidyl-prolyl cis-trans isomerase. In Buchnera aphidicola subsp. Acyrthosiphon pisum (strain 5A), this protein is Trigger factor.